A 110-amino-acid polypeptide reads, in one-letter code: Large ribosomal subunit protein uL22 (110 aa).

It belongs to the universal ribosomal protein uL22 family. In terms of assembly, part of the 50S ribosomal subunit.

Its function is as follows. This protein binds specifically to 23S rRNA; its binding is stimulated by other ribosomal proteins, e.g. L4, L17, and L20. It is important during the early stages of 50S assembly. It makes multiple contacts with different domains of the 23S rRNA in the assembled 50S subunit and ribosome. In terms of biological role, the globular domain of the protein is located near the polypeptide exit tunnel on the outside of the subunit, while an extended beta-hairpin is found that lines the wall of the exit tunnel in the center of the 70S ribosome. In Cellvibrio japonicus (strain Ueda107) (Pseudomonas fluorescens subsp. cellulosa), this protein is Large ribosomal subunit protein uL22.